A 180-amino-acid chain; its full sequence is Protein SPO16 homolog (180 aa).

In terms of assembly, homooligomer. Interacts with SHOC, SYCP1 and SYCE3.

The protein localises to the chromosome. Plays a key role in reinforcing the integrity of the central element of the synaptonemal complex (SC) thereby stabilizing SC, ensuring progression of meiotic prophase I in male and female germ cells. Promotes homologous recombination and crossing-over in meiotic prophase I via its association with SHOC1. Required for the localization of TEX11 and MSH4 to recombination intermediates. This chain is Protein SPO16 homolog, found in Homo sapiens (Human).